The sequence spans 358 residues: D-alanine--D-alanine ligase B (358 aa).

An ATP-grasp domain is found at 147–352 (KYVLENFKFK…YSALIDELIE (206 aa)). 179–234 (VEKLQYDVFIKPANSGSSVGITKAHNKEELLKGLEEAFIHDKNVLVEEAINAREIE) contacts ATP. D305, E319, and N321 together coordinate Mg(2+).

This sequence belongs to the D-alanine--D-alanine ligase family. Mg(2+) is required as a cofactor. The cofactor is Mn(2+).

The protein localises to the cytoplasm. The catalysed reaction is 2 D-alanine + ATP = D-alanyl-D-alanine + ADP + phosphate + H(+). It participates in cell wall biogenesis; peptidoglycan biosynthesis. Its function is as follows. Cell wall formation. This Clostridium tetani (strain Massachusetts / E88) protein is D-alanine--D-alanine ligase B.